A 122-amino-acid chain; its full sequence is NADPH-dependent 7-cyano-7-deazaguanine reductase (122 aa).

C34 serves as the catalytic Thioimide intermediate. D41 acts as the Proton donor in catalysis. Substrate contacts are provided by residues 56 to 58 and 75 to 76; these read VEL and HE.

Belongs to the GTP cyclohydrolase I family. QueF type 1 subfamily.

The protein localises to the cytoplasm. The enzyme catalyses 7-aminomethyl-7-carbaguanine + 2 NADP(+) = 7-cyano-7-deazaguanine + 2 NADPH + 3 H(+). It functions in the pathway tRNA modification; tRNA-queuosine biosynthesis. Functionally, catalyzes the NADPH-dependent reduction of 7-cyano-7-deazaguanine (preQ0) to 7-aminomethyl-7-deazaguanine (preQ1). The sequence is that of NADPH-dependent 7-cyano-7-deazaguanine reductase from Anaeromyxobacter sp. (strain Fw109-5).